A 316-amino-acid chain; its full sequence is Protease HtpX homolog (316 aa).

The helical transmembrane segment at 16–36 threads the bilayer; that stretch reads LFMALGFTIGGTGGAMIALVV. Zn(2+) is bound at residue His-130. Glu-131 is a catalytic residue. Residue His-134 coordinates Zn(2+). A run of 2 helical transmembrane segments spans residues 145–165 and 174–194; these read MTAT…FFGA and LATI…QMAI. Glu-199 is a binding site for Zn(2+). The interval 285 to 316 is disordered; sequence PNFAALSERRGSVSSVPRTRRRSSALDPNGRG.

The protein belongs to the peptidase M48B family. Zn(2+) serves as cofactor.

Its subcellular location is the cell inner membrane. In Rhizorhabdus wittichii (strain DSM 6014 / CCUG 31198 / JCM 15750 / NBRC 105917 / EY 4224 / RW1) (Sphingomonas wittichii), this protein is Protease HtpX homolog.